Reading from the N-terminus, the 430-residue chain is Adenylosuccinate synthetase (430 aa).

Residues 12–18 (GDEGKGK) and 40–42 (GHT) contribute to the GTP site. Catalysis depends on Asp-13, which acts as the Proton acceptor. The Mg(2+) site is built by Asp-13 and Gly-40. Residues 13 to 16 (DEGK), 38 to 41 (NAGH), Thr-128, Arg-142, Gln-223, Thr-238, and Arg-302 each bind IMP. His-41 acts as the Proton donor in catalysis. 298–304 (TTTGRPR) contacts substrate. GTP is bound by residues Arg-304, 330 to 332 (SID), and 412 to 414 (SVG).

It belongs to the adenylosuccinate synthetase family. In terms of assembly, homodimer. The cofactor is Mg(2+).

Its subcellular location is the cytoplasm. The enzyme catalyses IMP + L-aspartate + GTP = N(6)-(1,2-dicarboxyethyl)-AMP + GDP + phosphate + 2 H(+). Its pathway is purine metabolism; AMP biosynthesis via de novo pathway; AMP from IMP: step 1/2. Its function is as follows. Plays an important role in the de novo pathway of purine nucleotide biosynthesis. Catalyzes the first committed step in the biosynthesis of AMP from IMP. In Streptococcus pyogenes serotype M12 (strain MGAS9429), this protein is Adenylosuccinate synthetase.